Here is a 4753-residue protein sequence, read N- to C-terminus: Dynein heavy chain domain-containing protein 1 (4753 aa).

Coiled coils occupy residues 826–858 (IHAI…ALHE) and 936–991 (KLQQ…LSEL). The tract at residues 2688 to 2766 (HLGKDHQESE…SRGMKESISH (79 aa)) is disordered. Acidic residues predominate over residues 2695–2712 (ESEEEEEEERVPEVESEG). Positions 2740 to 2751 (RVSNSRDPSLTP) are enriched in polar residues. Coiled-coil stretches lie at residues 3125–3227 (LQQQ…MSKA), 3590–3651 (MRNQ…QGSK), and 4431–4460 (GAQL…LTHV). The tract at residues 3580-3657 (ALTEGRGKGL…QGSKPAYETQ (78 aa)) is disordered. A compositionally biased stretch (acidic residues) spans 3602–3615 (KEEDDESEESNEAE). Positions 3616 to 3631 (DQTKEQKAEERKNEQE) are enriched in basic and acidic residues. The span at 3632 to 3641 (KEQEENEEKE) shows a compositional bias: acidic residues. The disordered stretch occupies residues 4669–4697 (ALQDSPSSQPSPLPPVSISTQAPGTSDLP).

This sequence belongs to the dynein heavy chain family. Expressed in spermatozoa (at protein level).

The protein localises to the cell projection. It localises to the cilium. Its subcellular location is the flagellum. Functionally, essential for the normal assembly and function of sperm flagella axonemes. In Homo sapiens (Human), this protein is Dynein heavy chain domain-containing protein 1 (DNHD1).